We begin with the raw amino-acid sequence, 353 residues long: C-X-C chemokine receptor type 2 (353 aa).

The Extracellular segment spans residues 1-45; it reads FNMESDSFEDFWKGEDLSNYSYSSALPPFLLDASPCEPESLEINK. N19 carries an N-linked (GlcNAc...) asparagine glycan. Residues 46 to 72 traverse the membrane as a helical segment; sequence YFVVIIYALVFLLSLLGNSLVILVILY. The Cytoplasmic portion of the chain corresponds to 73 to 81; the sequence is SRVGRSVTD. A helical membrane pass occupies residues 82 to 102; that stretch reads VYLLNLALADLLFALTLPIWA. The Extracellular segment spans residues 103–117; the sequence is ASKVNGWIFGTFLCK. Residues C116 and C193 are joined by a disulfide bond. Residues 118–139 form a helical membrane-spanning segment; sequence VVSLLKEVNFYSGILLLACISV. Topologically, residues 140-160 are cytoplasmic; sequence DRYLAIVHATRTLTQKRYLVK. Residues 161-180 traverse the membrane as a helical segment; it reads FICLSIWGLSLLLALPVLLF. Residues 181-205 lie on the Extracellular side of the membrane; sequence RRTIYPSNVSPVCYEDMGNNTANWR. The helical transmembrane segment at 206 to 228 threads the bilayer; that stretch reads MLLRILPQSFGFIVPLLIMLFCY. Topologically, residues 229 to 248 are cytoplasmic; that stretch reads GFTLRTLFKAHMGQKHRAMR. The helical transmembrane segment at 249-270 threads the bilayer; that stretch reads VIFAVVLIFLLCWLPYNLVLLA. Residues 271 to 291 are Extracellular-facing; that stretch reads DTLMRTQVIQETCERRNHINQ. The helical transmembrane segment at 292–312 threads the bilayer; the sequence is ALDATEILGILHSCLNPLIYA. Residues 313–353 lie on the Cytoplasmic side of the membrane; the sequence is FIGQKFCHGLLKILAIHGLISKDSLPKDSRPSFVGSSSGHT.

It belongs to the G-protein coupled receptor 1 family. Interacts with IL8. Interacts with GNAI2. Post-translationally, phosphorylated upon ligand binding; which is required for desensitization.

The protein localises to the cell membrane. Its function is as follows. Receptor for interleukin-8 which is a powerful neutrophil chemotactic factor. Binding of IL-8 to the receptor causes activation of neutrophils. This response is mediated via a G-protein that activates a phosphatidylinositol-calcium second messenger system. Binds to IL-8 with high affinity. Also binds with high affinity to CXCL3, GRO/MGSA and NAP-2. The polypeptide is C-X-C chemokine receptor type 2 (CXCR2) (Gorilla gorilla gorilla (Western lowland gorilla)).